The sequence spans 78 residues: Large ribosomal subunit protein bL28 (78 aa).

Residues methionine 1–threonine 25 are disordered.

Belongs to the bacterial ribosomal protein bL28 family.

The sequence is that of Large ribosomal subunit protein bL28 from Aliivibrio fischeri (strain ATCC 700601 / ES114) (Vibrio fischeri).